The chain runs to 311 residues: Ribosomal protein L11 methyltransferase (311 aa).

Residues Thr-163, Gly-184, Asp-206, and Asn-248 each contribute to the S-adenosyl-L-methionine site.

It belongs to the methyltransferase superfamily. PrmA family.

Its subcellular location is the cytoplasm. The enzyme catalyses L-lysyl-[protein] + 3 S-adenosyl-L-methionine = N(6),N(6),N(6)-trimethyl-L-lysyl-[protein] + 3 S-adenosyl-L-homocysteine + 3 H(+). Methylates ribosomal protein L11. This Clostridium acetobutylicum (strain ATCC 824 / DSM 792 / JCM 1419 / IAM 19013 / LMG 5710 / NBRC 13948 / NRRL B-527 / VKM B-1787 / 2291 / W) protein is Ribosomal protein L11 methyltransferase.